Here is a 532-residue protein sequence, read N- to C-terminus: Methionine--tRNA ligase (532 aa).

Residues 16–26 (YYVNDVPHLGS) carry the 'HIGH' region motif. Residues Cys-131, Cys-134, Cys-149, and His-152 each contribute to the Zn(2+) site. Positions 305–309 (KMGKS) match the 'KMSKS' region motif. ATP is bound at residue Lys-308.

Belongs to the class-I aminoacyl-tRNA synthetase family. MetG type 2A subfamily. In terms of assembly, monomer. It depends on Zn(2+) as a cofactor.

The protein localises to the cytoplasm. It carries out the reaction tRNA(Met) + L-methionine + ATP = L-methionyl-tRNA(Met) + AMP + diphosphate. Is required not only for elongation of protein synthesis but also for the initiation of all mRNA translation through initiator tRNA(fMet) aminoacylation. The chain is Methionine--tRNA ligase (metG) from Synechocystis sp. (strain ATCC 27184 / PCC 6803 / Kazusa).